Here is a 396-residue protein sequence, read N- to C-terminus: Metallophosphoesterase 1 (396 aa).

A helical membrane pass occupies residues 28 to 48 (TVVIISVLLFCEYFIYYLVLF). Asp75, Asp117, Asn155, His249, His303, and His305 together coordinate a divalent metal cation. A helical transmembrane segment spans residues 356-376 (TVLTMYGAAAGFLMILILVHF).

Belongs to the metallophosphoesterase superfamily. MPPE1 family. In terms of assembly, interacts with GPI-anchor proteins (via the GPI portion). Interacts with TMED10. Requires Mn(2+) as cofactor.

It localises to the endoplasmic reticulum-Golgi intermediate compartment membrane. Functionally, metallophosphoesterase that catalyzes the removal of a side-chain ethanolamine-phosphate (EtNP) from the second mannose of the GPI-anchor protein intermediate. Participates in the glycan remodeling steps of GPI-anchor maturation to allow an efficient transport of GPI-anchor proteins from the endoplasmic reticulum to the Golgi. The chain is Metallophosphoesterase 1 from Mus musculus (Mouse).